The chain runs to 1658 residues: MEPDNTPSSRLRAAGVGGRAVFFCMVLYCTCCLRLAQAQSADVDVLQRLGLVGKRPPQGFIPIKSGVILTTRARIDVPVSSVIPVSLGSTFSIILSVCSHRINNAFLFTIVTKRKRLHLGVQFIPGQILVYLGQNSSVNFDYNVHNGQWHNLALEIQGQKVTLYTSCGNTSIQANLDFQNEETLDSEGSFRLGKMSQNSVQFEGAICQFDIHPSAQAAHNYCKYIKKQCREADTYRPNLPPLLPLLPLDPNRSTIQTPKVVTDINERHLSLTRDKMNINHEGQTTVPPMITQPTLQLPLQTTAQTTASIRNRTSQISPKPTQQNRKKAKKERNKLHILKEHQISVTDSPTSQQQNQVDIPTTTTPELSSTFRVSEMTTLAAQRPLPKETSFFEAKATFFESVTPAAMDGLQTFDLEPTQYSLLELTGLKGEPGLPGPPGPPGQPGLPGKRGPRGPSGPHGKPGPPGTPGPKGKKGNPGISPGRAPSGIKGDPGLVGLPGQPGQPGRKGQKGHPGPSGHPGDQGIRGPDGSPGAKGYPGRQGLPGPIGNMGPKGVRGFIGIPGIFGLPGADGERGLPGVPGKKGKMGRPGFPGDFGERGPPGPDGNPGEIGAPGPVGIPGFIGDMGPVGMVGPPGLIGPKGVPGNPGEPGLKGDKGELGLPGEPGEPGFQGDKGIQGSPGLPGVQGKPGPQGKIGDRGPDGLPGPLGPEGFPGDIGPPGQNGVEGPKGNAGVRGIPGPGGLPGLEGDQGPVGPAGAPGLEGRPGRKGISGNPGEEGMKGEPGMTGNPGMLGERGPVGFVGPFGEMGLAGEKGDRGETGQPGPPGEKGAMGHPGAPGERGLSGPAGAPGPHGSRGLSGTRGPKGTRGARGPDGPVGEKGMMGMKGPEGPPGKQGLSGQMGKIGETGEAGPTGFTGVQGPTGPPGAKGILGEPGPQGSPGVLGPLGEIGAIGLPGKAGDQGLPGEPGEKGAVGSPGNIGEQGLIGPRGDPGVDGEAGPSGPDGAKGEQGDVGLEGESGEKGVIGFKGTEGRTGDPGLIGVKGPEGKPGKIGERGKPGEKGSKGHQGQLGEMGALGEQGDTGFIGPKGSRGTTGFMGAPGKMGQQGEPGLVGYEGHQGPQGSLGSPGPKGEKGEQGDDGKVEGPPGPSGDIGPVGNRGDRGEPGDPGYPGLEGVQGERGKEGAPGVPGNSGPRGFPGPKGSKGNKGPKGKNSPRGESGNRGSPGPVGVPGPRGVIGREGFEGEPGLDGAAGKDGAKGMPGDLGRDGDVGLPGKPGPQGNAGAPGLPGVQGSFGPKGERGITGHSGPPGKRGLNGGMGFPGKQGDQGFKGQPGDAGEQGFPGVLGIFGPQGPPGDFGPVGIQGPKGPQGLMGMQGAIGPVGIIGPSGNPGPQGDKGNKGEMGVQGPRGPPGPRGPPGPPGLPAVAFSHENEALGAALHVFDSRSALRSEMYQDTDLPLLDQGSEIFKTLHYLSILIHSIKNPLGTQENPARMCRDLLECEHRLNDGTYWIDPNLGCSSDNIEVTCSFTSGGQTCLKPVTASKLEIGVSLIQMNFIHLLSSEAVQIITVHCLNVSVWASEDSKTPSSSMVYFKAWDGQIIEAGGFIEPDLLKDECWITDGRWHQTQFIFRTQDPNLLPIVEIYNLPSTKPGSHYHLEVGPVCFL.

The signal sequence occupies residues 1-38 (MEPDNTPSSRLRAAGVGGRAVFFCMVLYCTCCLRLAQA). Positions 66 to 229 (GVILTTRARI…NYCKYIKKQC (164 aa)) constitute a Laminin G-like domain. Polar residues predominate over residues 308 to 323 (SIRNRTSQISPKPTQQ). Disordered regions lie at residues 308–332 (SIRN…KKER), 345–364 (VTDS…TTTT), 427–550 (GLKG…GNMG), 571–614 (GERG…APGP), 637–1332 (GPKG…DAGE), and 1377–1415 (IIGP…GPPG). Residues 424–1417 (ELTGLKGEPG…RGPPGPPGLP (994 aa)) form a triple-helical region region. Collagen-like domains are found at residues 425-478 (LTGL…GNPG), 493-552 (GLVG…MGPK), 556-615 (GFIG…PGPV), 622-681 (GDMG…PGLP), 685-744 (GKPG…PGLE), 748-807 (GPVG…MGLA), and 811-870 (GDRG…RGPD). Residues 434 to 444 (LPGPPGPPGQP) show a composition bias toward pro residues. Positions 491–506 (DPGLVGLPGQPGQPGR) are enriched in low complexity. Low complexity-rich tracts occupy residues 657 to 666 (LGLPGEPGEP) and 678 to 692 (PGLP…PQGK). The span at 733 to 742 (GIPGPGGLPG) shows a compositional bias: gly residues. Low complexity-rich tracts occupy residues 837 to 852 (RGLS…HGSR) and 875 to 890 (EKGM…PPGK). Collagen-like domains lie at 892–951 (GLSG…IGLP), 952–1011 (GKAG…VGLE), 1024–1083 (GTEG…IGPK), 1084–1137 (GSRG…DGKV), 1139–1198 (GPPG…KGSK), 1199–1258 (GNKG…PGDL), 1268–1327 (GKPG…KGQP), and 1361–1420 (GPQG…PAVA). Residues 1040 to 1058 (PEGKPGKIGERGKPGEKGS) show a composition bias toward basic and acidic residues. The span at 1112-1124 (HQGPQGSLGSPGP) shows a compositional bias: low complexity. A compositionally biased stretch (basic and acidic residues) spans 1125–1137 (KGEKGEQGDDGKV). Residues 1215 to 1230 (NRGSPGPVGVPGPRGV) show a composition bias toward low complexity. The segment covering 1307–1316 (GLNGGMGFPG) has biased composition (gly residues). Positions 1402-1415 (RGPPGPRGPPGPPG) are enriched in pro residues. Positions 1421 to 1658 (FSHENEALGA…HLEVGPVCFL (238 aa)) are cleaved as a propeptide — C-terminal propeptide. The 201-residue stretch at 1458-1658 (SEIFKTLHYL…HLEVGPVCFL (201 aa)) folds into the Fibrillar collagen NC1 domain. 3 disulfide bridges follow: Cys1488–Cys1520, Cys1529–Cys1656, and Cys1565–Cys1609. The Ca(2+) site is built by Asp1506, Asn1508, Cys1511, and Asp1514. Asn1567 carries an N-linked (GlcNAc...) asparagine glycan.

Belongs to the fibrillar collagen family. As to expression, weakly expressed in the notochord from the 6 somite stage. Expressed throughout the notochord at 13 somites, then becomes restricted to the distal tip of the notochord by 24 hpf. Also expressed in head cartilages by 48 hpf.

The protein resides in the secreted. It localises to the extracellular space. Its subcellular location is the extracellular matrix. Functionally, may play a role during the calcification of cartilage and the transition of cartilage to bone. Together with col27a1a, plays a role in development of the notochord and axial skeleton. The protein is Collagen alpha-1(XXVII) chain B (col27a1b) of Danio rerio (Zebrafish).